Reading from the N-terminus, the 563-residue chain is Minor fimbrium subunit Mfa1 (563 aa).

Residues 1–19 (MKLNKMFLVGALLSLGFAS) form the signal peptide. The N-palmitoyl cysteine moiety is linked to residue Cys-20. Cys-20 is lipidated: S-diacylglycerol cysteine. Residues 20-49 (CSKEGNGPDPDNAAKSYMSMTLSMPMGSAR) constitute a propeptide that is removed on maturation. The tract at residues 504–543 (LVPDPDPSNPENPNNPDPNPDEPGTPVPTDPENPLPDQDT) is disordered. Pro residues predominate over residues 505-537 (VPDPDPSNPENPNNPDPNPDEPGTPVPTDPENP).

The protein belongs to the bacteroidetes fimbrillin superfamily. Structural component of the fimbrial stalk. Minor fimbriae are composed of a structural subunit, most often Mfa1, and the accessory subunits Mfa3, Mfa4 and Mfa5. Mfa1 interacts with Mfa2; this anchors the fimbrium in the membrane. Fimbrium assembly occurs by linear, head-to-tail oligomerization of fimbrial subunits. This is mediated via insertion of a C-terminal beta-strand from one subunit into a groove in the N-terminal domain of the following subunit. Interacts with S.gordonii ssp5.

Its subcellular location is the fimbrium. It localises to the cell outer membrane. Its function is as follows. Structural subunit of the minor fimbriae. These filamentous pili are attached to the cell surface; they mediate biofilm formation, adhesion onto host cells and onto other bacteria that are part of the oral microbiome. They play an important role in invasion of periodontal tissues and are recognized as major virulence factors. Mfa1 orthologs from different strains have highly divergent sequences, and this correlates with pathogenicity. In Porphyromonas gingivalis (strain ATCC 33277 / DSM 20709 / CIP 103683 / JCM 12257 / NCTC 11834 / 2561), this protein is Minor fimbrium subunit Mfa1.